We begin with the raw amino-acid sequence, 281 residues long: Ribonuclease HII (281 aa).

Residues 1 to 46 (MIRDTKQPIKVPAKPASRSGGKAKTVKPKTIKPKTSAKAAAAKPAS) are disordered. A compositionally biased stretch (low complexity) spans 33–46 (PKTSAKAAAAKPAS). An RNase H type-2 domain is found at 73–261 (WPIAGCDEAG…VAAAWQKIEG (189 aa)). Residues D79, E80, and D170 each coordinate a divalent metal cation.

This sequence belongs to the RNase HII family. Requires Mn(2+) as cofactor. The cofactor is Mg(2+).

It is found in the cytoplasm. It catalyses the reaction Endonucleolytic cleavage to 5'-phosphomonoester.. In terms of biological role, endonuclease that specifically degrades the RNA of RNA-DNA hybrids. This is Ribonuclease HII from Rhodopseudomonas palustris (strain TIE-1).